The following is a 521-amino-acid chain: Bifunctional purine biosynthesis protein PurH (521 aa).

In terms of domain architecture, MGS-like spans 1–145; it reads MIKQALISVS…KNHRDVTVVV (145 aa).

It belongs to the PurH family.

It catalyses the reaction (6R)-10-formyltetrahydrofolate + 5-amino-1-(5-phospho-beta-D-ribosyl)imidazole-4-carboxamide = 5-formamido-1-(5-phospho-D-ribosyl)imidazole-4-carboxamide + (6S)-5,6,7,8-tetrahydrofolate. The catalysed reaction is IMP + H2O = 5-formamido-1-(5-phospho-D-ribosyl)imidazole-4-carboxamide. The protein operates within purine metabolism; IMP biosynthesis via de novo pathway; 5-formamido-1-(5-phospho-D-ribosyl)imidazole-4-carboxamide from 5-amino-1-(5-phospho-D-ribosyl)imidazole-4-carboxamide (10-formyl THF route): step 1/1. It functions in the pathway purine metabolism; IMP biosynthesis via de novo pathway; IMP from 5-formamido-1-(5-phospho-D-ribosyl)imidazole-4-carboxamide: step 1/1. In Burkholderia orbicola (strain AU 1054), this protein is Bifunctional purine biosynthesis protein PurH.